We begin with the raw amino-acid sequence, 350 residues long: S-adenosylmethionine:tRNA ribosyltransferase-isomerase (350 aa).

It belongs to the QueA family. In terms of assembly, monomer.

It localises to the cytoplasm. It catalyses the reaction 7-aminomethyl-7-carbaguanosine(34) in tRNA + S-adenosyl-L-methionine = epoxyqueuosine(34) in tRNA + adenine + L-methionine + 2 H(+). The protein operates within tRNA modification; tRNA-queuosine biosynthesis. Functionally, transfers and isomerizes the ribose moiety from AdoMet to the 7-aminomethyl group of 7-deazaguanine (preQ1-tRNA) to give epoxyqueuosine (oQ-tRNA). This is S-adenosylmethionine:tRNA ribosyltransferase-isomerase from Bacillus cereus (strain ZK / E33L).